Here is a 270-residue protein sequence, read N- to C-terminus: FKBP-type peptidyl-prolyl cis-trans isomerase FkpA (270 aa).

A signal peptide spans 1–25; that stretch reads MKSLFKVTLLATTMAVALHAPITFA. The PPIase FKBP-type domain occupies 164-249; sequence SDTVVVNYKG…VFDVELLDVK (86 aa).

The protein belongs to the FKBP-type PPIase family.

The protein localises to the periplasm. The catalysed reaction is [protein]-peptidylproline (omega=180) = [protein]-peptidylproline (omega=0). PPIases accelerate the folding of proteins. It catalyzes the cis-trans isomerization of proline imidic peptide bonds in oligopeptides. This Escherichia coli (strain K12) protein is FKBP-type peptidyl-prolyl cis-trans isomerase FkpA (fkpA).